A 606-amino-acid chain; its full sequence is UvrABC system protein C (606 aa).

The GIY-YIG domain maps to 14-93 (QNPGVYLMKD…IKKHSPRYNV (80 aa)). The UVR domain occupies 203–238 (PDLINRLKFEMQTEADLEHFERAAQIRDTILAIQTT).

Belongs to the UvrC family. Interacts with UvrB in an incision complex.

It is found in the cytoplasm. Its function is as follows. The UvrABC repair system catalyzes the recognition and processing of DNA lesions. UvrC both incises the 5' and 3' sides of the lesion. The N-terminal half is responsible for the 3' incision and the C-terminal half is responsible for the 5' incision. This is UvrABC system protein C from Desulforapulum autotrophicum (strain ATCC 43914 / DSM 3382 / VKM B-1955 / HRM2) (Desulfobacterium autotrophicum).